We begin with the raw amino-acid sequence, 106 residues long: 10 kDa heat shock protein, mitochondrial (106 aa).

The residue at position 2 (S2) is an N-acetylserine. Phosphoserine is present on S31.

This sequence belongs to the GroES chaperonin family. In terms of assembly, homohexamer. Post-translationally, the N-terminus is blocked.

It localises to the mitochondrion matrix. Functionally, eukaryotic CPN10 homolog which is essential for mitochondrial protein biogenesis, together with CPN60. Binds to CPN60 in the presence of Mg-ATP and suppresses the ATPase activity of the latter. This chain is 10 kDa heat shock protein, mitochondrial (HSP10), found in Saccharomyces cerevisiae (strain ATCC 204508 / S288c) (Baker's yeast).